A 434-amino-acid chain; its full sequence is Na(+)/H(+) antiporter NhaA 1 (434 aa).

Residues 1–15 (MISPNPALPTPPHAP) show a composition bias toward pro residues. The tract at residues 1 to 21 (MISPNPALPTPPHAPTAPGRG) is disordered. 12 consecutive transmembrane segments (helical) span residues 34–54 (GGIL…SPAA), 74–94 (LSVS…VVGL), 112–132 (ALPI…FTLI), 143–163 (GWAI…AVVG), 173–193 (FLLT…AVFY), 196–216 (GIAF…GILV), 222–242 (AWYV…ASGI), 245–265 (TIAG…RAGV), 294–314 (IAVP…LEGL), 326–346 (IIVA…LLVA), 362–382 (VLGL…VGEL), and 393–413 (AVKV…GTLL).

This sequence belongs to the NhaA Na(+)/H(+) (TC 2.A.33) antiporter family.

Its subcellular location is the cell membrane. It carries out the reaction Na(+)(in) + 2 H(+)(out) = Na(+)(out) + 2 H(+)(in). Its function is as follows. Na(+)/H(+) antiporter that extrudes sodium in exchange for external protons. The polypeptide is Na(+)/H(+) antiporter NhaA 1 (Clavibacter michiganensis subsp. michiganensis (strain NCPPB 382)).